A 38-amino-acid polypeptide reads, in one-letter code: Photosystem II reaction center protein L (38 aa).

Residues 17–37 (SLYWGLLLIFVLAILFSSYIF) traverse the membrane as a helical segment.

This sequence belongs to the PsbL family. In terms of assembly, PSII is composed of 1 copy each of membrane proteins PsbA, PsbB, PsbC, PsbD, PsbE, PsbF, PsbH, PsbI, PsbJ, PsbK, PsbL, PsbM, PsbT, PsbX, PsbY, PsbZ, Psb30/Ycf12, at least 3 peripheral proteins of the oxygen-evolving complex and a large number of cofactors. It forms dimeric complexes.

It is found in the plastid. It localises to the chloroplast thylakoid membrane. Functionally, one of the components of the core complex of photosystem II (PSII). PSII is a light-driven water:plastoquinone oxidoreductase that uses light energy to abstract electrons from H(2)O, generating O(2) and a proton gradient subsequently used for ATP formation. It consists of a core antenna complex that captures photons, and an electron transfer chain that converts photonic excitation into a charge separation. This subunit is found at the monomer-monomer interface and is required for correct PSII assembly and/or dimerization. This chain is Photosystem II reaction center protein L, found in Nephroselmis olivacea (Green alga).